Here is an 82-residue protein sequence, read N- to C-terminus: DNA-directed RNA polymerase subunit Rpo5 (82 aa).

It belongs to the archaeal Rpo5/eukaryotic RPB5 RNA polymerase subunit family. In terms of assembly, part of the RNA polymerase complex.

The protein localises to the cytoplasm. The catalysed reaction is RNA(n) + a ribonucleoside 5'-triphosphate = RNA(n+1) + diphosphate. In terms of biological role, DNA-dependent RNA polymerase (RNAP) catalyzes the transcription of DNA into RNA using the four ribonucleoside triphosphates as substrates. The protein is DNA-directed RNA polymerase subunit Rpo5 of Thermococcus onnurineus (strain NA1).